The sequence spans 33 residues: Photosystem II reaction center protein Psb30 (33 aa).

A helical transmembrane segment spans residues 5-25 (LIVQLTSLILISIAGPIIIAL).

The protein belongs to the Psb30/Ycf12 family. PSII is composed of 1 copy each of membrane proteins PsbA, PsbB, PsbC, PsbD, PsbE, PsbF, PsbH, PsbI, PsbJ, PsbK, PsbL, PsbM, PsbT, PsbY, PsbZ, Psb30/Ycf12, peripheral proteins of the oxygen-evolving complex and a large number of cofactors. It forms dimeric complexes.

It localises to the plastid. It is found in the chloroplast thylakoid membrane. Its function is as follows. A core subunit of photosystem II (PSII), probably helps stabilize the reaction center. This Euglena myxocylindracea protein is Photosystem II reaction center protein Psb30.